Consider the following 492-residue polypeptide: uncharacterized protein (492 aa).

The signal sequence occupies residues 1–22; the sequence is MIRPNMFALLMLVVLAITSVNA. Residues asparagine 92, asparagine 97, asparagine 119, asparagine 146, asparagine 213, asparagine 267, and asparagine 458 are each glycosylated (N-linked (GlcNAc...) asparagine; by host).

Its subcellular location is the secreted. This is an uncharacterized protein from Acanthamoeba polyphaga (Amoeba).